A 1026-amino-acid chain; its full sequence is Multidrug resistance protein MdtC (1026 aa).

Helical transmembrane passes span isoleucine 15 to alanine 35, glutamate 333 to leucine 353, leucine 360 to cysteine 380, leucine 387 to leucine 407, valine 431 to leucine 451, phenylalanine 463 to proline 483, leucine 528 to proline 548, leucine 853 to serine 873, leucine 897 to valine 917, proline 953 to glycine 973, and isoleucine 984 to valine 1004.

The protein belongs to the resistance-nodulation-cell division (RND) (TC 2.A.6) family. MdtC subfamily. In terms of assembly, part of a tripartite efflux system composed of MdtA, MdtB and MdtC. MdtC forms a heteromultimer with MdtB.

The protein resides in the cell inner membrane. The chain is Multidrug resistance protein MdtC from Salmonella newport (strain SL254).